The sequence spans 439 residues: Oocyte zinc finger protein XlCOF28 (439 aa).

9 C2H2-type zinc fingers span residues 6-28, 34-56, 62-84, 90-112, 118-140, 146-168, 174-196, 202-224, and 230-252; these read YECT…QRTH, FKCT…KKCH, YMCT…IRTH, FTCT…LRIH, HKCN…QRTH, FQCT…LRIH, YKCS…QRTH, FQCS…ERTH, and YKCS…QKTH. Disordered regions lie at residues 246–275 and 285–304; these read KLHQ…APKT and AGLE…ESPE. 4 consecutive C2H2-type zinc fingers follow at residues 333-355, 361-383, 389-411, and 417-439; these read HKCT…QRTH, FKCS…RKIH, YTCA…RRTH, and YICA…QRIH.

The protein belongs to the krueppel C2H2-type zinc-finger protein family.

The protein localises to the nucleus. Functionally, may be involved in transcriptional regulation. This is Oocyte zinc finger protein XlCOF28 from Xenopus laevis (African clawed frog).